The following is a 182-amino-acid chain: Large ribosomal subunit protein uL6 (182 aa).

It belongs to the universal ribosomal protein uL6 family. In terms of assembly, part of the 50S ribosomal subunit.

Functionally, this protein binds to the 23S rRNA, and is important in its secondary structure. It is located near the subunit interface in the base of the L7/L12 stalk, and near the tRNA binding site of the peptidyltransferase center. The protein is Large ribosomal subunit protein uL6 of Caldicellulosiruptor saccharolyticus (strain ATCC 43494 / DSM 8903 / Tp8T 6331).